The sequence spans 63 residues: Large ribosomal subunit protein uL30 (63 aa).

It belongs to the universal ribosomal protein uL30 family. Part of the 50S ribosomal subunit.

This chain is Large ribosomal subunit protein uL30, found in Rickettsia canadensis (strain McKiel).